The sequence spans 134 residues: Probable glycine cleavage system H protein (134 aa).

In terms of domain architecture, Lipoyl-binding spans Thr29–Lys110. Lys70 is subject to N6-lipoyllysine.

This sequence belongs to the GcvH family. The glycine cleavage system is composed of four proteins: P, T, L and H. (R)-lipoate is required as a cofactor.

The glycine cleavage system catalyzes the degradation of glycine. The H protein shuttles the methylamine group of glycine from the P protein to the T protein. In Pyrococcus furiosus (strain ATCC 43587 / DSM 3638 / JCM 8422 / Vc1), this protein is Probable glycine cleavage system H protein.